The chain runs to 339 residues: Centrosomal protein of 41 kDa (339 aa).

The interval 56–99 is disordered; the sequence is RLEDSDSATSEADTDIAAKTNGKGSPEEQSPSPVQFINSTGAGD. Residues Ser-62 and Ser-65 each carry the phosphoserine modification. Low complexity predominate over residues 62–73; that stretch reads SATSEADTDIAA. Thr-75 bears the Phosphothreonine mark. A phosphoserine mark is found at Ser-80 and Ser-87. Over residues 82 to 99 the composition is skewed to polar residues; the sequence is EEQSPSPVQFINSTGAGD. The region spanning 135–232 is the Rhodanese domain; sequence PDCPFLLLDV…LAQKFPEGLV (98 aa). A disordered region spans residues 283–339; the sequence is DQGPANNPSRLNQNNSAGRDLKVPAGRGGQNLPTGCPTSHSNSRTLNSGHLQGKPWK. Residues 286–299 are compositionally biased toward polar residues; that stretch reads PANNPSRLNQNNSA. Arg-309 bears the Omega-N-methylarginine mark. Residues 313-332 show a composition bias toward polar residues; sequence NLPTGCPTSHSNSRTLNSGH.

This sequence belongs to the CEP41 family. As to quaternary structure, found in a complex with TTLL6.

The protein localises to the cytoplasm. The protein resides in the cytoskeleton. It is found in the microtubule organizing center. It localises to the centrosome. Its subcellular location is the cell projection. The protein localises to the cilium. The protein resides in the cilium basal body. Functionally, required during ciliogenesis for tubulin glutamylation in cilium. Probably acts by participating in the transport of TTLL6, a tubulin polyglutamylase, between the basal body and the cilium. The polypeptide is Centrosomal protein of 41 kDa (Cep41) (Rattus norvegicus (Rat)).